The primary structure comprises 274 residues: NH(3)-dependent NAD(+) synthetase (274 aa).

46–53 (GISGGQDS) is an ATP binding site. Asp52 serves as a coordination point for Mg(2+). A deamido-NAD(+)-binding site is contributed by Arg140. Thr160 provides a ligand contact to ATP. Position 165 (Glu165) interacts with Mg(2+). Deamido-NAD(+)-binding residues include Lys173 and Asp180. ATP-binding residues include Lys189 and Thr211. Deamido-NAD(+) is bound at residue 260 to 261 (HK).

Belongs to the NAD synthetase family. In terms of assembly, homodimer.

The enzyme catalyses deamido-NAD(+) + NH4(+) + ATP = AMP + diphosphate + NAD(+) + H(+). The protein operates within cofactor biosynthesis; NAD(+) biosynthesis; NAD(+) from deamido-NAD(+) (ammonia route): step 1/1. In terms of biological role, catalyzes the ATP-dependent amidation of deamido-NAD to form NAD. Uses ammonia as a nitrogen source. This Streptococcus suis (strain 05ZYH33) protein is NH(3)-dependent NAD(+) synthetase.